Reading from the N-terminus, the 471-residue chain is Soluble pyridine nucleotide transhydrogenase (471 aa).

Position 41–50 (41–50 (EREPSVGGGC)) interacts with FAD.

The protein belongs to the class-I pyridine nucleotide-disulfide oxidoreductase family. It depends on FAD as a cofactor.

Its subcellular location is the cytoplasm. The catalysed reaction is NAD(+) + NADPH = NADH + NADP(+). Functionally, conversion of NADPH, generated by peripheral catabolic pathways, to NADH, which can enter the respiratory chain for energy generation. The polypeptide is Soluble pyridine nucleotide transhydrogenase (Aliivibrio fischeri (strain ATCC 700601 / ES114) (Vibrio fischeri)).